A 1405-amino-acid polypeptide reads, in one-letter code: Rho guanine nucleotide exchange factor 18 (1405 aa).

Disordered regions lie at residues 1–47 (MGSE…EDGF), 92–115 (ETHR…ALPQ), and 289–330 (PGKS…PGKR). Composition is skewed to basic and acidic residues over residues 92–103 (ETHRQEARRESS) and 308–330 (RQKE…PGKR). The C2H2-type; degenerate zinc finger occupies 347–372 (SSCPLCGEPLLNSASLKEHPRTTLLS). The 198-residue stretch at 485-682 (KRQDVLYELM…KDIISQVDAK (198 aa)) folds into the DH domain. In terms of domain architecture, PH spans 723 to 825 (QLHLEGALCW…WMAHIRRAVE (103 aa)). Residues 936 to 1016 (QVEEGSVSAG…PQAVEMPSTE (81 aa)) are disordered. A Phosphothreonine modification is found at Thr-952. Ser-961 is subject to Phosphoserine. Positions 1084–1181 (FEKQREERAG…RERLELLRRF (98 aa)) form a coiled coil. Disordered regions lie at residues 1198-1242 (EAQP…VERP), 1274-1309 (RQTA…WESS), and 1328-1405 (ESAS…VIFF). Ser-1336 and Ser-1338 each carry phosphoserine. Positions 1355–1365 (FPAPSPAPAAT) are enriched in pro residues. Residues 1375-1394 (TSLPPVSPASSLPTTPLATT) are compositionally biased toward low complexity. Basic and acidic residues predominate over residues 1396–1405 (EVSKEDVIFF).

Interacts with SEPT9; interaction may inhibit GEF activity. Interacts with Gbetagamma subunits GNB1 and GNG2. Interacts with EPB41L4B. Interacts with PATJ (via C-terminus).

The protein resides in the cytoplasm. It localises to the cytoskeleton. Its subcellular location is the cell membrane. It is found in the apical cell membrane. Functionally, acts as a guanine nucleotide exchange factor (GEF) for RhoA GTPases. May play a role in actin cytoskeleton reorganization in different tissues since its activation induces formation of actin stress fibers. Also acts as a GEF for RAC1, inducing production of reactive oxygen species (ROS). Does not act as a GEF for CDC42. The G protein beta-gamma (Gbetagamma) subunits of heterotrimeric G proteins act as activators, explaining the integrated effects of LPA and other G-protein coupled receptor agonists on actin stress fiber formation, cell shape change and ROS production. Required for EPB41L4B-mediated regulation of the circumferential actomyosin belt in epithelial cells. The protein is Rho guanine nucleotide exchange factor 18 (Arhgef18) of Mus musculus (Mouse).